The primary structure comprises 521 residues: NAD(P)H-quinone oxidoreductase subunit 2 (521 aa).

14 helical membrane-spanning segments follow: residues 16–36, 43–63, 80–100, 110–130, 133–153, 168–188, 211–231, 245–265, 279–299, 307–327, 335–355, 379–399, 401–421, and 467–487; these read ILPEGIVIITLMVVLIGDLIG, WLPYGAIAGLLAALFALYTAW, LSIVFRGIIALSTIVTLLMSI, LAEFIGIMLTATLGGMFLSGA, LVMIFISLEMLSISSYLMTGY, LLIGASSSAIFLYGSSLLYGL, LGLAIALVFVIAGIAFKISAV, PTPVVAFLSVGSKAAGFALAI, WHLIFTALAILSMVLGNVVAL, MLAYSSIGQAGFVMIGLTAGT, VFYLLVYLFMNLGAFSGVILF, LGLSLCLLSLGGIPPLAGFFG, IYLFWAGWQAELYGLVLLALV, and VGLVLSVIATSLAGILSNPLF.

The protein belongs to the complex I subunit 2 family. As to quaternary structure, NDH-1 can be composed of about 15 different subunits; different subcomplexes with different compositions have been identified which probably have different functions.

The protein resides in the cellular thylakoid membrane. It carries out the reaction a plastoquinone + NADH + (n+1) H(+)(in) = a plastoquinol + NAD(+) + n H(+)(out). The enzyme catalyses a plastoquinone + NADPH + (n+1) H(+)(in) = a plastoquinol + NADP(+) + n H(+)(out). In terms of biological role, NDH-1 shuttles electrons from an unknown electron donor, via FMN and iron-sulfur (Fe-S) centers, to quinones in the respiratory and/or the photosynthetic chain. The immediate electron acceptor for the enzyme in this species is believed to be plastoquinone. Couples the redox reaction to proton translocation, and thus conserves the redox energy in a proton gradient. Cyanobacterial NDH-1 also plays a role in inorganic carbon-concentration. The sequence is that of NAD(P)H-quinone oxidoreductase subunit 2 from Crocosphaera subtropica (strain ATCC 51142 / BH68) (Cyanothece sp. (strain ATCC 51142)).